The following is a 271-amino-acid chain: MTVVSAFLVPGTPLPQLKPEVPSWGQLAAATERAGKALAASRPDVVLVYSTQWLAVLDQQWLTRPRSEGVHVDENWYEFGDLAYDIRADTALAEACVTSSPLHGVHARGVNYDGFPIDTGTITACTLMGIGTDAFPLVVGSNNLYHSGEITEKLAALAVDCAKDQNKRVAVVGVGGLSGSLFREEIDPREDRIANEEDDKWNRRVLKLIEAGDVSALREAMPVYAKEARVDMGFKHLHWILGALKGKFSGANVLGYGPSYGSGAAVIEFRL.

It belongs to the LigB/MhpB extradiol dioxygenase family. In terms of assembly, the APD complex is a heterotetramer of 2 alpha (CnbCa) and 2 beta (CnbCb) subunits.

The protein operates within xenobiotic degradation; nitrobenzene degradation. It functions in the pathway xenobiotic degradation; 4-chloronitrobenzene degradation. Functionally, component of the 2-aminophenol 1,6-dioxygenase (APD) complex that catalyzes the ring fission of 2-aminophenol to produce 2-aminomuconic semialdehyde. CnbCa may have a role in the stability of the complex. The complex is also active on other substrates such as 2-amino-5-chlorophenol (68% activity), protocatechuate (33% activity) and catechol (5% activity). Both 2-aminophenol and 2-amino-5-cholorophenol are likely native substrates for this dioxygenase which is involved in the reductive degradation pathway of both nitrobenzene (NB) and 4-chloronitrobenzene (4-CNB), allowing C.testosteroni strain CNB-1 to grow on these compounds as sole source of carbon, nitrogen, and energy. This is 2-aminophenol 1,6-dioxygenase subunit alpha from Comamonas testosteroni (Pseudomonas testosteroni).